The following is a 110-amino-acid chain: UPF0122 protein STER_0914 (110 aa).

This sequence belongs to the UPF0122 family.

Its function is as follows. Might take part in the signal recognition particle (SRP) pathway. This is inferred from the conservation of its genetic proximity to ftsY/ffh. May be a regulatory protein. The chain is UPF0122 protein STER_0914 from Streptococcus thermophilus (strain ATCC BAA-491 / LMD-9).